The chain runs to 169 residues: 16S rRNA aminocarboxypropyltransferase (169 aa).

Residues threonine 17, leucine 67, leucine 90, and threonine 109 each coordinate S-adenosyl-L-methionine.

Belongs to the TDD superfamily. TSR3 family.

The protein localises to the cytoplasm. The catalysed reaction is an N(1)-methylpseudouridine in rRNA + S-adenosyl-L-methionine = N(1)-methyl-N(3)-[(3S)-3-amino-3-carboxypropyl]pseudouridine in rRNA + S-methyl-5'-thioadenosine + H(+). Aminocarboxypropyltransferase that catalyzes the aminocarboxypropyl transfer on pseudouridine corresponding to position 914 in M.jannaschii 16S rRNA. It constitutes the last step in biosynthesis of the hypermodified N1-methyl-N3-(3-amino-3-carboxypropyl) pseudouridine (m1acp3-Psi). This Methanothermobacter thermautotrophicus (strain ATCC 29096 / DSM 1053 / JCM 10044 / NBRC 100330 / Delta H) (Methanobacterium thermoautotrophicum) protein is 16S rRNA aminocarboxypropyltransferase.